Reading from the N-terminus, the 366-residue chain is G kinase-anchoring protein 1 (366 aa).

The interval 1 to 95 is interaction with IRS1; sequence MASAVLSSVP…SHAVCNAQHD (95 aa). Disordered stretches follow at residues 20–110 and 147–177; these read QVDS…REEN and EYEDAENTSTQSKVMNKKDKRKNHQGKDRPL. A phosphoserine mark is found at Ser23, Ser25, and Ser27. Polar residues predominate over residues 39-50; sequence TGKSQTLGSKST. The stretch at 47–77 forms a coiled coil; it reads SKSTTNEKKREKRRKKKEQQQSEANELRNLA. Residue Ser106 is modified to Phosphoserine; by PKG. Coiled coils occupy residues 128 to 160 and 243 to 353; these read ADLEKALLLSKLEYEEHKKEYEDAENTSTQSKV and EHNQ…YQGG.

The protein belongs to the GKAP1 family. Interacts with PRKG1 and IRS1.

Its subcellular location is the golgi apparatus. Its function is as follows. Regulates insulin-dependent IRS1 tyrosine phosphorylation in adipocytes by modulating the availability of IRS1 to IR tyrosine kinase. Its association with IRS1 is required for insulin-induced translocation of SLC2A4 to the cell membrane. Involved in TNF-induced impairment of insulin-dependent IRS1 tyrosine phosphorylation. This is G kinase-anchoring protein 1 (GKAP1) from Homo sapiens (Human).